We begin with the raw amino-acid sequence, 514 residues long: CENP-B homolog protein 2 (514 aa).

In terms of domain architecture, HTH CENPB-type spans 70–145 (QIRRNRQGKY…KKRCLKHGLK (76 aa)). The DDE-1 domain maps to 172 to 384 (FDPKDIFNMD…FEPSIIYNCF (213 aa)).

It is found in the nucleus. It localises to the chromosome. The protein localises to the centromere. Functionally, binds to the central core and core-associated repeat regions of centromeric heterochromatin. The sequence is that of CENP-B homolog protein 2 (cbh2) from Schizosaccharomyces pombe (strain 972 / ATCC 24843) (Fission yeast).